We begin with the raw amino-acid sequence, 652 residues long: Coiled-coil domain-containing protein 81 (652 aa).

Phosphoserine is present on S206. Residues K238–S256 are compositionally biased toward basic and acidic residues. The tract at residues K238–K258 is disordered. Residues S275, S296, and S417 each carry the phosphoserine modification. The stretch at M436–N493 forms a coiled coil.

It is found in the cytoplasm. The protein resides in the cytoskeleton. The protein localises to the microtubule organizing center. Its subcellular location is the centrosome. The sequence is that of Coiled-coil domain-containing protein 81 (CCDC81) from Homo sapiens (Human).